The chain runs to 183 residues: MTATAQQLEFLKNSIKSIQDYPKPGILFRDVTSLLEDPKAYTLSIELLVERYKKAGITKVVGTEARGFLFGAPVALGLGVGFVPVRKPRKLPRETIAETYELEYGTDQLEIHVDAIKPGDNVLVVDDLLATGGTIEATVKLIRRLGGKVTDAAFIINLFDLGGEQRLEKQGITCYSLVPFPGH.

This sequence belongs to the purine/pyrimidine phosphoribosyltransferase family. Homodimer.

Its subcellular location is the cytoplasm. The enzyme catalyses AMP + diphosphate = 5-phospho-alpha-D-ribose 1-diphosphate + adenine. Its pathway is purine metabolism; AMP biosynthesis via salvage pathway; AMP from adenine: step 1/1. Catalyzes a salvage reaction resulting in the formation of AMP, that is energically less costly than de novo synthesis. This is Adenine phosphoribosyltransferase from Salmonella arizonae (strain ATCC BAA-731 / CDC346-86 / RSK2980).